The sequence spans 381 residues: MAGREKRRRVAALDGEERRRRQEEAATLLHRIRGLVRWVVAEVAAGRSPTVALHRYQNYCSSASAAAASPCACSYDVPVGTDVLSLLHRGSHASRLNVLLRVLLVVQQLLQQNKHCSKRDIYYMYPSIFQEQAVVDRAINDICVLFKCSRHNLNVVPVAKGLVMGWIRFLEGEKEVYCVTNVNAAFSIPVSIEAIKDVVSVADYILIVEKETVFQRLANDKFCERNRCIVITGRGYPDIPTRRFLRYLVEQLHLPVYCLVDADPYGFDILATYKFGSLQLAYDANFLRVPDIRWLGVFTSDFEDYRLPDCCLLHLSSEDRRKAEGILSRCYLHREAPQWRLELEAMLQKGVKFEIEALSACSISFLSEEYIPKKIKQGRHI.

The Topo IIA-type catalytic domain occupies 23 to 162 (EEAATLLHRI…LNVVPVAKGL (140 aa)). Tyrosine 123 (O-(5'-phospho-DNA)-tyrosine intermediate) is an active-site residue. Glutamate 209 and aspartate 261 together coordinate Mg(2+).

Belongs to the TOP6A family. The cofactor is Mg(2+). In terms of tissue distribution, highly expressed in flowers before pollination. Expressed in roots and shoots.

The protein resides in the nucleus. The enzyme catalyses ATP-dependent breakage, passage and rejoining of double-stranded DNA.. In terms of biological role, required for meiotic recombination. Mediates DNA cleavage that forms the double-strand breaks (DSB) that initiate meiotic recombination. May be involved in plant growth and development, and stress tolerance. The polypeptide is Meiotic recombination protein SPO11-1 (SPO11-1) (Oryza sativa subsp. indica (Rice)).